A 155-amino-acid polypeptide reads, in one-letter code: MGVSPVRDSWLVDEASDELISSERKLIAVECHDDDSQVINVKVEDICKDMSDKVVLKLQFRLCHKYRKLLDITLLGCRMKVYTQLKNTSLNSLKSLLQKRMINICIGNYAIGIRMFFVNINQFIKSCKWIVNTEDVYTICTLYHTRDTDVLNVIK.

Belongs to the nanovirus U1 protein family.

The protein is Protein U1 (DNA-U1) of Cicer arietinum (Chickpea).